We begin with the raw amino-acid sequence, 1492 residues long: DNA polymerase alpha catalytic subunit (1492 aa).

Disordered stretches follow at residues 34–112 (DFIV…VEQS), 162–195 (SVTLESREEQERRRQSEQLKQQANIGQNQSDVNP), and 210–234 (ANSYQSKQNSHSVSKSKPGDHEMAN). The segment covering 42 to 55 (YGYRDHGGEIWDRD) has biased composition (basic and acidic residues). Residues 93–105 (NAASTNPSAQQKP) are compositionally biased toward polar residues. Residues 166–178 (ESREEQERRRQSE) show a composition bias toward basic and acidic residues. Composition is skewed to polar residues over residues 184 to 194 (ANIGQNQSDVN) and 210 to 224 (ANSYQSKQNSHSVSK). Zn(2+)-binding residues include Cys1314, Cys1317, Cys1341, Cys1344, Cys1375, Cys1380, Cys1393, and Cys1398. The CysA-type zinc-finger motif lies at 1314–1344 (CPHCAHNYHFPGILVPSSNNTELTGLACVKC). Residues 1375–1398 (CKEPQCGMKTNQLLLNNKCIVKGC) carry the CysB motif motif.

This sequence belongs to the DNA polymerase type-B family.

Its subcellular location is the nucleus. It carries out the reaction DNA(n) + a 2'-deoxyribonucleoside 5'-triphosphate = DNA(n+1) + diphosphate. In terms of biological role, polymerase alpha in a complex with DNA primase is a replicative polymerase. The chain is DNA polymerase alpha catalytic subunit from Sterkiella nova (Ciliate).